The following is a 347-amino-acid chain: Beta carbonic anhydrase 1, chloroplastic (347 aa).

The transit peptide at 1 to 113 (MSTAPLSGFF…AAAKVEQITA (113 aa)) directs the protein to the chloroplast. At A114 the chain carries N-acetylalanine. The residue at position 175 (S175) is a Phosphoserine. Position 203 is a phosphotyrosine (Y203). S266 bears the Phosphoserine mark. The residue at position 280 (C280) is an S-nitrosocysteine.

The protein belongs to the beta-class carbonic anhydrase family. As to quaternary structure, homohexamer. In terms of processing, S-nitrosylation at Cys-280 is up-regulated during nitrosative burst and suppresses both binding of salicylic acid and carbonic anhydrase activity. S-nitrosylated in response to an avirulent but not to a virulent bacterial strain. As to expression, strongly expressed in aerial tissues including leaves, stems, flowers and siliques. Accumulates in both guard cells and mesophyll cells.

The protein resides in the plastid. Its subcellular location is the chloroplast stroma. It localises to the cell membrane. It carries out the reaction hydrogencarbonate + H(+) = CO2 + H2O. Its function is as follows. Reversible hydration of carbon dioxide. Required for photosynthesis in cotyledons. Binds salicylic acid. Together with BCA4, involved in the CO(2) signaling pathway which controls gas-exchange between plants and the atmosphere by modulating stomatal development and movements. Promotes water use efficiency. The protein is Beta carbonic anhydrase 1, chloroplastic of Arabidopsis thaliana (Mouse-ear cress).